Consider the following 297-residue polypeptide: 3-mercaptopyruvate sulfurtransferase (297 aa).

The residue at position 2 (Ala-2) is an N-acetylalanine. Phosphoserine occurs at positions 3, 15, 23, and 35. A Rhodanese 1 domain is found at 25–144; that stretch reads AGQPLQLLDA…WLRQNLPLSS (120 aa). N6-acetyllysine; alternate is present on Lys-40. At Lys-40 the chain carries N6-succinyllysine; alternate. The tract at residues 145–160 is hinge; it reads GKSQPAPAEFRAQLDP. Residues Lys-146 and Lys-164 each carry the N6-succinyllysine modification. The region spanning 174 to 288 is the Rhodanese 2 domain; the sequence is ESRRFQVVDS…WYMRARPEDV (115 aa). Position 188 (Arg-188) interacts with substrate. The Cysteine persulfide intermediate role is filled by Cys-248.

In terms of assembly, monomer (active form). Homodimer; disulfide-linked (inactive form).

It localises to the cytoplasm. It is found in the mitochondrion. The protein localises to the synapse. The protein resides in the synaptosome. The enzyme catalyses 2-oxo-3-sulfanylpropanoate + [thioredoxin]-dithiol = [thioredoxin]-disulfide + hydrogen sulfide + pyruvate + H(+). By oxidative stress, and thioredoxin. Under oxidative stress conditions, the catalytic cysteine site is converted to a sulfenate which inhibits the MPST enzyme activity. Reduced thioredoxin cleaves an intersubunit disulfide bond to turn on the redox switch and reactivate the enzyme. Functionally, transfer of a sulfur ion to cyanide or to other thiol compounds. Also has weak rhodanese activity. Detoxifies cyanide and is required for thiosulfate biosynthesis. Acts as an antioxidant. In combination with cysteine aminotransferase (CAT), contributes to the catabolism of cysteine and is an important producer of hydrogen sulfide in the brain, retina and vascular endothelial cells. Hydrogen sulfide H(2)S is an important synaptic modulator, signaling molecule, smooth muscle contractor and neuroprotectant. Its production by the 3MST/CAT pathway is regulated by calcium ions. The polypeptide is 3-mercaptopyruvate sulfurtransferase (MPST) (Homo sapiens (Human)).